A 238-amino-acid chain; its full sequence is Endo-chitosanase (238 aa).

The first 17 residues, 1–17 (MRLSEILTVALVTGATA), serve as a signal peptide directing secretion. Asn83 carries an N-linked (GlcNAc...) asparagine glycan.

It belongs to the glycosyl hydrolase 75 family.

It is found in the secreted. The enzyme catalyses Endohydrolysis of beta-(1-&gt;4)-linkages between D-glucosamine residues in a partly acetylated chitosan.. Chitosanase catalyzing the endo-type cleavage of chitosan, the deacylated form of chitin. Chitosanase may be crucial in the degradation of the deacetylated portion of chitin in the fungal cell wall. Chitoolisaccharides produced by the hydrolysis of partially N-acetylated chitosan are known to have many biological activities, including antibacterial activity, immune-enhancing effects, and elicitor activity. The chitosans with higher degrees of deacetylation were shown to be the better substrates. Chitodimer, chitotrimer, and chitotetramer are the major products but monoacetyl chitodimer, monoacetyl chitotrimer, and monoacetyl chitotetramer are also produced. The polypeptide is Endo-chitosanase (csn) (Aspergillus fumigatus (Neosartorya fumigata)).